The chain runs to 604 residues: Arginine--tRNA ligase (604 aa).

The short motif at 142 to 152 (PNIAKEMHVGH) is the 'HIGH' region element.

This sequence belongs to the class-I aminoacyl-tRNA synthetase family. In terms of assembly, monomer.

The protein localises to the cytoplasm. It catalyses the reaction tRNA(Arg) + L-arginine + ATP = L-arginyl-tRNA(Arg) + AMP + diphosphate. This chain is Arginine--tRNA ligase, found in Prochlorococcus marinus (strain MIT 9312).